A 279-amino-acid chain; its full sequence is Undecaprenyl-diphosphatase (279 aa).

8 consecutive transmembrane segments (helical) span residues 1 to 21 (MVLE…LPIS), 39 to 59 (GRFF…LYFF), 96 to 116 (LLLV…VRFV), 128 to 148 (FTMG…DALF), 155 to 175 (IFQI…FAII), 201 to 221 (FSFL…LVAG), 231 to 251 (YSLI…SALL), and 259 to 279 (FVLF…VSFF).

It belongs to the UppP family.

It localises to the cell membrane. The catalysed reaction is di-trans,octa-cis-undecaprenyl diphosphate + H2O = di-trans,octa-cis-undecaprenyl phosphate + phosphate + H(+). In terms of biological role, catalyzes the dephosphorylation of undecaprenyl diphosphate (UPP). Confers resistance to bacitracin. The chain is Undecaprenyl-diphosphatase from Tropheryma whipplei (strain TW08/27) (Whipple's bacillus).